The primary structure comprises 183 residues: uncharacterized protein (183 aa).

Residues 1-17 form the signal peptide; sequence MVLFILVLYTCIQDGNG.

This is an uncharacterized protein from Saccharomyces cerevisiae (strain ATCC 204508 / S288c) (Baker's yeast).